The chain runs to 108 residues: Large ribosomal subunit protein bL31B (108 aa).

The tract at residues 86 to 108 is disordered; sequence KPETVVEDVLPKGKKKSPAKKKK. A compositionally biased stretch (basic residues) spans 97–108; sequence KGKKKSPAKKKK.

This sequence belongs to the bacterial ribosomal protein bL31 family. Type B subfamily. In terms of assembly, part of the 50S ribosomal subunit.

This chain is Large ribosomal subunit protein bL31B, found in Chlamydia trachomatis serovar L2 (strain ATCC VR-902B / DSM 19102 / 434/Bu).